The chain runs to 737 residues: Protein OPG064 (737 aa).

An N-acetylmethionine; by host modification is found at methionine 1. A disulfide bond links cysteine 496 and cysteine 535.

The protein belongs to the orthopoxvirus OPG064 family. Interacts with host KLC2; this interaction promotes IEV trafficking by engaging the host kinesin-1 complex. Interacts with protein OPG056. Post-translationally, N-acetylated on initiator methionine by host.

Plays a role in intracellular enveloped virus (IEV) transport to the cell surface on microtubules. Together with protein OPG056, forms a complex that interacts with host KLC2 (kinesin light chain isoform 2) to engage the kinesin-1 complex and thereby promote IEV trafficking. This chain is Protein OPG064 (OPG064), found in Homo sapiens (Human).